The chain runs to 348 residues: UPF0283 membrane protein HAPS_0079 (348 aa).

3 helical membrane-spanning segments follow: residues 57–77 (FLAA…QWLI), 86–106 (IYFA…GAII), and 203–223 (ENAI…MVAW).

Belongs to the UPF0283 family.

The protein localises to the cell inner membrane. In Glaesserella parasuis serovar 5 (strain SH0165) (Haemophilus parasuis), this protein is UPF0283 membrane protein HAPS_0079.